Reading from the N-terminus, the 206-residue chain is Protein GET1 (206 aa).

Residues 1-4 are Lumenal-facing; the sequence is MPSL. A helical membrane pass occupies residues 5 to 24; that stretch reads LITALFLNVIIYVINTVGAA. Residues 25-110 are Cytoplasmic-facing; the sequence is TVDGLLWLLY…TFDITIKIAR (86 aa). A coiled-coil region spans residues 75–100; it reads AKLRRRHDKALEAYEAKNNELTQSKS. Residues 111–131 traverse the membrane as a helical segment; it reads WAATSGLMLFLQFWYSKTPIF. At 132 to 155 the chain is on the lumenal side; sequence TLPPGWIPWQVQWVLSFPRAPMGT. Residues 156 to 172 form a helical membrane-spanning segment; sequence VSIQIWSGACATVVALV. The Cytoplasmic segment spans residues 173–206; sequence GDAMKASLAYVSKPKIDRIKLGATMEGKEGKKRQ.

It belongs to the WRB/GET1 family. Interacts with GET3.

It localises to the endoplasmic reticulum membrane. In terms of biological role, required for the post-translational delivery of tail-anchored (TA) proteins to the endoplasmic reticulum. Acts as a membrane receptor for soluble GET3, which recognizes and selectively binds the transmembrane domain of TA proteins in the cytosol. The chain is Protein GET1 from Ajellomyces capsulatus (strain H143) (Darling's disease fungus).